The chain runs to 282 residues: Protein N-terminal and lysine N-methyltransferase efm7 (282 aa).

Basic and acidic residues predominate over residues Met-1–Glu-13. The interval Met-1–Tyr-32 is disordered. Residues Trp-67, Gly-93–Ala-95, Asp-115, Trp-152, and Ala-179 each bind S-adenosyl-L-methionine.

This sequence belongs to the class I-like SAM-binding methyltransferase superfamily. EFM7 family.

Its subcellular location is the cytoplasm. Functionally, S-adenosyl-L-methionine-dependent protein methyltransferase that trimethylates the N-terminal glycine 'Gly-2' of elongation factor 1-alpha, before also catalyzing the mono- and dimethylation of 'Lys-3'. In Neurospora crassa (strain ATCC 24698 / 74-OR23-1A / CBS 708.71 / DSM 1257 / FGSC 987), this protein is Protein N-terminal and lysine N-methyltransferase efm7 (nnt-1).